The primary structure comprises 309 residues: Porphobilinogen deaminase (309 aa).

Cysteine 240 carries the post-translational modification S-(dipyrrolylmethanemethyl)cysteine.

Belongs to the HMBS family. Monomer. The cofactor is dipyrromethane.

The enzyme catalyses 4 porphobilinogen + H2O = hydroxymethylbilane + 4 NH4(+). Its pathway is porphyrin-containing compound metabolism; protoporphyrin-IX biosynthesis; coproporphyrinogen-III from 5-aminolevulinate: step 2/4. Its function is as follows. Tetrapolymerization of the monopyrrole PBG into the hydroxymethylbilane pre-uroporphyrinogen in several discrete steps. The protein is Porphobilinogen deaminase of Lawsonia intracellularis (strain PHE/MN1-00).